The primary structure comprises 253 residues: UPF0246 protein LBA1843 (253 aa).

The protein belongs to the UPF0246 family.

This Lactobacillus acidophilus (strain ATCC 700396 / NCK56 / N2 / NCFM) protein is UPF0246 protein LBA1843.